Reading from the N-terminus, the 470-residue chain is Zinc finger and BTB domain-containing protein 8A.1-A (470 aa).

A BTB domain is found at cysteine 24–glycine 92. Residues glutamate 260–glutamine 280 form a disordered region. A compositionally biased stretch (polar residues) spans tryptophan 269–leucine 278. 2 C2H2-type zinc fingers span residues phenylalanine 316–histidine 338 and tyrosine 344–histidine 367. Over residues glycine 439–serine 450 the composition is skewed to basic and acidic residues. A disordered region spans residues glycine 439–aspartate 470.

The protein resides in the nucleus. May be involved in transcriptional regulation. This Xenopus laevis (African clawed frog) protein is Zinc finger and BTB domain-containing protein 8A.1-A (zbtb8a.1-a).